A 197-amino-acid polypeptide reads, in one-letter code: Orotate phosphoribosyltransferase (197 aa).

5-phospho-alpha-D-ribose 1-diphosphate-binding positions include R87, K91, H93, and 112–120 (DDVATTGGS). Positions 116 and 144 each coordinate orotate.

It belongs to the purine/pyrimidine phosphoribosyltransferase family. PyrE subfamily. As to quaternary structure, homodimer. The cofactor is Mg(2+).

The catalysed reaction is orotidine 5'-phosphate + diphosphate = orotate + 5-phospho-alpha-D-ribose 1-diphosphate. The protein operates within pyrimidine metabolism; UMP biosynthesis via de novo pathway; UMP from orotate: step 1/2. Functionally, catalyzes the transfer of a ribosyl phosphate group from 5-phosphoribose 1-diphosphate to orotate, leading to the formation of orotidine monophosphate (OMP). The protein is Orotate phosphoribosyltransferase of Sulfolobus acidocaldarius (strain ATCC 33909 / DSM 639 / JCM 8929 / NBRC 15157 / NCIMB 11770).